We begin with the raw amino-acid sequence, 222 residues long: Putative adhesin RP828 (222 aa).

An N-terminal signal peptide occupies residues 1–22 (MKKLLLIATASATILSSSVSFA).

Its function is as follows. Adheres to biotinylated epithelial (Vero cell) proteins. The chain is Putative adhesin RP828 from Rickettsia prowazekii (strain Madrid E).